A 159-amino-acid polypeptide reads, in one-letter code: uncharacterized protein (159 aa).

A run of 3 helical transmembrane segments spans residues 10–30, 52–72, and 96–116; these read FLSMFFMAILFFPAFNASLFF, MLILCFGFMSFSFLNIHVILL, and LTLIFLLIAIVIAPLIAPFVT.

It is found in the membrane. This is an uncharacterized protein from Escherichia coli (strain K12).